The sequence spans 168 residues: CDP-archaeol synthase (168 aa).

Helical transmembrane passes span 7–27, 55–75, 80–100, 109–129, and 130–150; these read PLESILAIIPALAANGAPVLL, GLATGILYGSVIALLAASATC, YAAGVFASIGAMLGDMLGAFI, GAPAPLLDQLDFYSGALLALY, and AAGYVVHPAVALTFTPIVIAL.

It belongs to the CDP-archaeol synthase family. The cofactor is Mg(2+).

It localises to the cell membrane. The catalysed reaction is 2,3-bis-O-(geranylgeranyl)-sn-glycerol 1-phosphate + CTP + H(+) = CDP-2,3-bis-O-(geranylgeranyl)-sn-glycerol + diphosphate. It functions in the pathway membrane lipid metabolism; glycerophospholipid metabolism. Catalyzes the formation of CDP-2,3-bis-(O-geranylgeranyl)-sn-glycerol (CDP-archaeol) from 2,3-bis-(O-geranylgeranyl)-sn-glycerol 1-phosphate (DGGGP) and CTP. This reaction is the third ether-bond-formation step in the biosynthesis of archaeal membrane lipids. The chain is CDP-archaeol synthase from Hyperthermus butylicus (strain DSM 5456 / JCM 9403 / PLM1-5).